The primary structure comprises 238 residues: MDISGAVKQKLLQFLGKQKKPELLATYLFYLEQALSLRPVVFVRDKIIFKTPEDAVRILEQDKKIWRETEIQISSEKPQVNENTKRIYICPFTGKVFADNVYANPQDAIYDWLSSCPQNMEKQGGVRIKRFLVSEDPDVIKEYAVPPKEPIIKTVFASAITGKLFHSLPPLLEDFISSYLRPMTLEEVQNQTKFQLESSFLSLLQDALVEDKIAAFIESLADDTAFHVYISQWVDTEE.

This sequence belongs to the chlamydial CPn_0658/CT_538/TC_0825 family.

The chain is Protein CPn_0658/CP_0089/CPj0658/CpB0684 from Chlamydia pneumoniae (Chlamydophila pneumoniae).